Reading from the N-terminus, the 437-residue chain is Xylose isomerase (437 aa).

Catalysis depends on residues histidine 101 and aspartate 104. Mg(2+) contacts are provided by glutamate 232, glutamate 268, histidine 271, aspartate 296, aspartate 307, aspartate 309, and aspartate 339.

The protein belongs to the xylose isomerase family. As to quaternary structure, homotetramer. Mg(2+) serves as cofactor.

It localises to the cytoplasm. It catalyses the reaction alpha-D-xylose = alpha-D-xylulofuranose. In Actinobacillus succinogenes (strain ATCC 55618 / DSM 22257 / CCUG 43843 / 130Z), this protein is Xylose isomerase.